The following is a 66-amino-acid chain: COP-associated protein (66 aa).

The 66-residue stretch at 1 to 66 (MKIDIPVKGM…AILDAGYELG (66 aa)) folds into the HMA domain. Cys-12 and Cys-15 together coordinate Cu cation.

Functionally, part of a cation-transporting system which is associated with copper export out of the H.pylori cells. This chain is COP-associated protein (copP), found in Helicobacter felis (strain ATCC 49179 / CCUG 28539 / NCTC 12436 / CS1).